The chain runs to 307 residues: Major pollen allergen Lol p 5a (307 aa).

The signal sequence occupies residues Met-1–Ala-25.

This sequence belongs to the Poa p IX/Phl p VI allergen family. Pollen, starch granules.

This Lolium perenne (Perennial ryegrass) protein is Major pollen allergen Lol p 5a (LOLPIB).